The following is a 312-amino-acid chain: Ribosomal RNA small subunit methyltransferase H (312 aa).

S-adenosyl-L-methionine-binding positions include 33–35 (GGH), aspartate 52, phenylalanine 81, aspartate 102, and glutamine 109.

Belongs to the methyltransferase superfamily. RsmH family.

The protein localises to the cytoplasm. The enzyme catalyses cytidine(1402) in 16S rRNA + S-adenosyl-L-methionine = N(4)-methylcytidine(1402) in 16S rRNA + S-adenosyl-L-homocysteine + H(+). Its function is as follows. Specifically methylates the N4 position of cytidine in position 1402 (C1402) of 16S rRNA. This chain is Ribosomal RNA small subunit methyltransferase H, found in Leuconostoc mesenteroides subsp. mesenteroides (strain ATCC 8293 / DSM 20343 / BCRC 11652 / CCM 1803 / JCM 6124 / NCDO 523 / NBRC 100496 / NCIMB 8023 / NCTC 12954 / NRRL B-1118 / 37Y).